We begin with the raw amino-acid sequence, 289 residues long: Acetyl-coenzyme A carboxylase carboxyl transferase subunit beta (289 aa).

The region spanning 28-289 (VMTKCPKCKK…QGGEMAVWQS (262 aa)) is the CoA carboxyltransferase N-terminal domain. Residues Cys-32, Cys-35, Cys-51, and Cys-54 each coordinate Zn(2+). Residues 32 to 54 (CPKCKKIMYTKELLKNLKVCVNC) form a C4-type zinc finger.

The protein belongs to the AccD/PCCB family. In terms of assembly, acetyl-CoA carboxylase is a heterohexamer composed of biotin carboxyl carrier protein (AccB), biotin carboxylase (AccC) and two subunits each of ACCase subunit alpha (AccA) and ACCase subunit beta (AccD). Zn(2+) is required as a cofactor.

Its subcellular location is the cytoplasm. It catalyses the reaction N(6)-carboxybiotinyl-L-lysyl-[protein] + acetyl-CoA = N(6)-biotinyl-L-lysyl-[protein] + malonyl-CoA. The protein operates within lipid metabolism; malonyl-CoA biosynthesis; malonyl-CoA from acetyl-CoA: step 1/1. Functionally, component of the acetyl coenzyme A carboxylase (ACC) complex. Biotin carboxylase (BC) catalyzes the carboxylation of biotin on its carrier protein (BCCP) and then the CO(2) group is transferred by the transcarboxylase to acetyl-CoA to form malonyl-CoA. The sequence is that of Acetyl-coenzyme A carboxylase carboxyl transferase subunit beta from Bacillus cereus (strain ATCC 10987 / NRS 248).